Here is a 292-residue protein sequence, read N- to C-terminus: D-galactarolactone isomerase (292 aa).

The protein belongs to the metallo-dependent hydrolases superfamily. Does not require a metal cofactor. serves as cofactor.

The catalysed reaction is D-galactaro-1,5-lactone = D-galactaro-1,4-lactone. The protein operates within carbohydrate acid metabolism; D-galacturonate degradation via prokaryotic oxidative pathway. Its function is as follows. Catalyzes the isomerization of D-galactaro-1,5-lactone to D-galactaro-1,4-lactone. This is a step in the oxidative degradation pathway of D-galacturonate, which allows A.tumefaciens to utilize D-galacturonate as a sole carbon source. The chain is D-galactarolactone isomerase from Agrobacterium fabrum (strain C58 / ATCC 33970) (Agrobacterium tumefaciens (strain C58)).